Reading from the N-terminus, the 264-residue chain is Acyl-[acyl-carrier-protein]--UDP-N-acetylglucosamine O-acyltransferase (264 aa).

It belongs to the transferase hexapeptide repeat family. LpxA subfamily. Homotrimer.

It is found in the cytoplasm. It carries out the reaction a (3R)-hydroxyacyl-[ACP] + UDP-N-acetyl-alpha-D-glucosamine = a UDP-3-O-[(3R)-3-hydroxyacyl]-N-acetyl-alpha-D-glucosamine + holo-[ACP]. It functions in the pathway glycolipid biosynthesis; lipid IV(A) biosynthesis; lipid IV(A) from (3R)-3-hydroxytetradecanoyl-[acyl-carrier-protein] and UDP-N-acetyl-alpha-D-glucosamine: step 1/6. Involved in the biosynthesis of lipid A, a phosphorylated glycolipid that anchors the lipopolysaccharide to the outer membrane of the cell. This is Acyl-[acyl-carrier-protein]--UDP-N-acetylglucosamine O-acyltransferase from Glaesserella parasuis serovar 5 (strain SH0165) (Haemophilus parasuis).